We begin with the raw amino-acid sequence, 420 residues long: Tyrosine--tRNA ligase 2 (420 aa).

Tyr-36 serves as a coordination point for L-tyrosine. A 'HIGH' region motif is present at residues 41–50 (PTADSLHIGH). L-tyrosine-binding residues include Tyr-171 and Gln-175. The 'KMSKS' region signature appears at 231–235 (KFGKT). Lys-234 serves as a coordination point for ATP. Residues 354 to 420 (LSLVDLLVTS…GKKKYFLLKY (67 aa)) form the S4 RNA-binding domain.

It belongs to the class-I aminoacyl-tRNA synthetase family. TyrS type 1 subfamily. As to quaternary structure, homodimer.

The protein resides in the cytoplasm. It carries out the reaction tRNA(Tyr) + L-tyrosine + ATP = L-tyrosyl-tRNA(Tyr) + AMP + diphosphate + H(+). Its function is as follows. Catalyzes the attachment of tyrosine to tRNA(Tyr) in a two-step reaction: tyrosine is first activated by ATP to form Tyr-AMP and then transferred to the acceptor end of tRNA(Tyr). The polypeptide is Tyrosine--tRNA ligase 2 (Enterococcus faecalis (strain ATCC 700802 / V583)).